The following is a 338-amino-acid chain: Glyceraldehyde-3-phosphate dehydrogenase (338 aa).

Arg13, Ile14, Asp35, Arg80, and Ser123 together coordinate NAD(+). D-glyceraldehyde 3-phosphate contacts are provided by Ser152, Cys153, Thr154, Thr183, Arg198, Thr212, Gly213, and Arg235. Cys153 (nucleophile) is an active-site residue. An NAD(+)-binding site is contributed by Asn317.

It belongs to the glyceraldehyde-3-phosphate dehydrogenase family. Homotetramer.

The protein localises to the tegument membrane. The catalysed reaction is D-glyceraldehyde 3-phosphate + phosphate + NAD(+) = (2R)-3-phospho-glyceroyl phosphate + NADH + H(+). The protein operates within carbohydrate degradation; glycolysis; pyruvate from D-glyceraldehyde 3-phosphate: step 1/5. In terms of biological role, this antigen is associated with human resistance to schistosomiasis. This chain is Glyceraldehyde-3-phosphate dehydrogenase, found in Schistosoma mansoni (Blood fluke).